A 260-amino-acid polypeptide reads, in one-letter code: Hydroxyethylthiazole kinase 2 (260 aa).

Substrate is bound at residue methionine 40. Residues arginine 116 and threonine 161 each coordinate ATP. Alanine 188 provides a ligand contact to substrate.

Belongs to the Thz kinase family. Mg(2+) is required as a cofactor.

The catalysed reaction is 5-(2-hydroxyethyl)-4-methylthiazole + ATP = 4-methyl-5-(2-phosphooxyethyl)-thiazole + ADP + H(+). It functions in the pathway cofactor biosynthesis; thiamine diphosphate biosynthesis; 4-methyl-5-(2-phosphoethyl)-thiazole from 5-(2-hydroxyethyl)-4-methylthiazole: step 1/1. In terms of biological role, catalyzes the phosphorylation of the hydroxyl group of 4-methyl-5-beta-hydroxyethylthiazole (THZ). The polypeptide is Hydroxyethylthiazole kinase 2 (Oceanobacillus iheyensis (strain DSM 14371 / CIP 107618 / JCM 11309 / KCTC 3954 / HTE831)).